A 61-amino-acid polypeptide reads, in one-letter code: Disintegrin rubistatin (61 aa).

The Disintegrin domain maps to 1-61 (NPCCDAATCK…ADCPRNGLYG (61 aa)). Cystine bridges form between Cys3-Cys26, Cys17-Cys23, Cys22-Cys47, and Cys35-Cys54. The Cell attachment site; atypical (MVD) signature appears at 39-41 (MVD).

This sequence belongs to the venom metalloproteinase (M12B) family. P-II subfamily. P-IIa sub-subfamily. Monomer. Expressed by the venom gland.

Its subcellular location is the secreted. Its function is as follows. Recombinant disintegrin rubistatin inhibits ADP-induced platelet aggregation. In addition, it strongly induces apoptosis, and inhibits cell migration and proliferation of the human cancer cell line SK-Mel-28. This is Disintegrin rubistatin from Crotalus ruber ruber (Red diamond rattlesnake).